A 271-amino-acid polypeptide reads, in one-letter code: Phosphonoacetaldehyde hydrolase (271 aa).

The active-site Nucleophile is aspartate 12. Mg(2+) is bound by residues aspartate 12 and alanine 14. Lysine 54 serves as the catalytic Schiff-base intermediate with substrate. Residue aspartate 188 coordinates Mg(2+).

The protein belongs to the HAD-like hydrolase superfamily. PhnX family. In terms of assembly, homodimer. Mg(2+) serves as cofactor.

The enzyme catalyses phosphonoacetaldehyde + H2O = acetaldehyde + phosphate + H(+). Its function is as follows. Involved in phosphonate degradation. This Aliivibrio salmonicida (strain LFI1238) (Vibrio salmonicida (strain LFI1238)) protein is Phosphonoacetaldehyde hydrolase.